The following is a 339-amino-acid chain: D-erythrose-4-phosphate dehydrogenase (339 aa).

11–12 is an NAD(+) binding site; sequence RI. Substrate is bound by residues 158 to 160, Arg-204, 217 to 218, and Arg-240; these read SCT and TK. Residue Cys-159 is the Nucleophile of the active site. Asn-322 serves as a coordination point for NAD(+).

The protein belongs to the glyceraldehyde-3-phosphate dehydrogenase family. Epd subfamily. In terms of assembly, homotetramer.

It is found in the cytoplasm. The catalysed reaction is D-erythrose 4-phosphate + NAD(+) + H2O = 4-phospho-D-erythronate + NADH + 2 H(+). Its pathway is cofactor biosynthesis; pyridoxine 5'-phosphate biosynthesis; pyridoxine 5'-phosphate from D-erythrose 4-phosphate: step 1/5. Its function is as follows. Catalyzes the NAD-dependent conversion of D-erythrose 4-phosphate to 4-phosphoerythronate. The sequence is that of D-erythrose-4-phosphate dehydrogenase from Aliivibrio salmonicida (strain LFI1238) (Vibrio salmonicida (strain LFI1238)).